The chain runs to 34 residues: Cycloamanide B proprotein (34 aa).

The propeptide occupies 1-10; the sequence is MSDINAARLP. Positions 11–17 form a cross-link, cyclopeptide (Ser-Pro); sequence SFFFPIP. Positions 18 to 34 are excised as a propeptide; sequence CISDDIEMVLTRGESLC.

The protein belongs to the MSDIN fungal toxin family. Processed by the macrocyclase-peptidase enzyme POPB to yield a cyclic decapeptide. POPB first removes 10 residues from the N-terminus. Conformational trapping of the remaining peptide forces the enzyme to release this intermediate rather than proceed to macrocyclization. The enzyme rebinds the remaining peptide in a different conformation and catalyzes macrocyclization of the N-terminal 7 residues.

In terms of biological role, cyclic heptapeptide that belongs to the MSDIN-like toxin family responsible for a large number of food poisoning cases and deaths. Cycloaminide B is non-toxic to mammals but shows immunosuppressive activity, probably through the inhibition of the action of interleukin-1 and interleukin-2. The protein is Cycloamanide B proprotein of Amanita phalloides (Death cap).